Consider the following 216-residue polypeptide: NADH-quinone oxidoreductase subunit C (216 aa).

This sequence belongs to the complex I 30 kDa subunit family. NDH-1 is composed of 14 different subunits. Subunits NuoB, C, D, E, F, and G constitute the peripheral sector of the complex.

Its subcellular location is the cell inner membrane. The catalysed reaction is a quinone + NADH + 5 H(+)(in) = a quinol + NAD(+) + 4 H(+)(out). Its function is as follows. NDH-1 shuttles electrons from NADH, via FMN and iron-sulfur (Fe-S) centers, to quinones in the respiratory chain. The immediate electron acceptor for the enzyme in this species is believed to be ubiquinone. Couples the redox reaction to proton translocation (for every two electrons transferred, four hydrogen ions are translocated across the cytoplasmic membrane), and thus conserves the redox energy in a proton gradient. This chain is NADH-quinone oxidoreductase subunit C, found in Francisella tularensis subsp. holarctica (strain FTNF002-00 / FTA).